A 176-amino-acid polypeptide reads, in one-letter code: MDLPGLIHDFLLVFLGLGLILGGLGVVLLANPIYSAFSLGLVFVCISLFYILANSHFVAAAQLLIYVGAINVLIIFAVMFINGSEYSKDFHLWTVGDGVTSVVCTSLFVSLITTIPDTSWYGIIWTTKANQIIEQDLISNSQQIGIHLSTDFFLPFEFISIILLVALIGAIAVARQ.

A run of 5 helical transmembrane segments spans residues 10–30, 33–53, 61–81, 92–112, and 152–172; these read FLLV…VLLA, IYSA…YILA, AQLL…VMFI, LWTV…VSLI, and FFLP…GAIA.

Belongs to the complex I subunit 6 family. As to quaternary structure, NDH is composed of at least 16 different subunits, 5 of which are encoded in the nucleus.

The protein resides in the plastid. The protein localises to the chloroplast thylakoid membrane. The enzyme catalyses a plastoquinone + NADH + (n+1) H(+)(in) = a plastoquinol + NAD(+) + n H(+)(out). It carries out the reaction a plastoquinone + NADPH + (n+1) H(+)(in) = a plastoquinol + NADP(+) + n H(+)(out). Functionally, NDH shuttles electrons from NAD(P)H:plastoquinone, via FMN and iron-sulfur (Fe-S) centers, to quinones in the photosynthetic chain and possibly in a chloroplast respiratory chain. The immediate electron acceptor for the enzyme in this species is believed to be plastoquinone. Couples the redox reaction to proton translocation, and thus conserves the redox energy in a proton gradient. In Guizotia abyssinica (Niger), this protein is NAD(P)H-quinone oxidoreductase subunit 6, chloroplastic (ndhG).